Consider the following 876-residue polypeptide: Alanine--tRNA ligase (876 aa).

Positions 565, 569, 667, and 671 each coordinate Zn(2+).

This sequence belongs to the class-II aminoacyl-tRNA synthetase family. Zn(2+) serves as cofactor.

It is found in the cytoplasm. The catalysed reaction is tRNA(Ala) + L-alanine + ATP = L-alanyl-tRNA(Ala) + AMP + diphosphate. Its function is as follows. Catalyzes the attachment of alanine to tRNA(Ala) in a two-step reaction: alanine is first activated by ATP to form Ala-AMP and then transferred to the acceptor end of tRNA(Ala). Also edits incorrectly charged Ser-tRNA(Ala) and Gly-tRNA(Ala) via its editing domain. The sequence is that of Alanine--tRNA ligase from Staphylococcus epidermidis (strain ATCC 35984 / DSM 28319 / BCRC 17069 / CCUG 31568 / BM 3577 / RP62A).